The primary structure comprises 490 residues: Phenylacetaldehyde synthase (490 aa).

Positions 92, 193, and 308 each coordinate L-phenylalanine. Lys-309 is subject to N6-(pyridoxal phosphate)lysine. Residue Phe-338 coordinates L-phenylalanine.

It belongs to the group II decarboxylase family. Homodimer. It depends on pyridoxal 5'-phosphate as a cofactor. As to expression, expressed in roots, rosette leaves, stems, cauline leaves and flowers.

The catalysed reaction is L-phenylalanine + O2 + H2O + H(+) = 2-phenylacetaldehyde + H2O2 + NH4(+) + CO2. It catalyses the reaction L-dopa + O2 + H2O + H(+) = 3,4-dihydroxyphenylacetaldehyde + H2O2 + NH4(+) + CO2. In terms of biological role, bifunctional enzyme that catalyzes the decarboxylation of L-phenylalanine to 2-phenylethylamine, which is then oxidized to form 2-phenylacetaldehyde, a constituent of floral scent. 2-phenylacetaldehyde is a precursor of 2-phenylethanol, another constituent of floral scent. Catalyzes both the decarboxylation and deamination of L-dopa to 3,4-dihydroxylphenylacetaldehyde (DHPAA). This Arabidopsis thaliana (Mouse-ear cress) protein is Phenylacetaldehyde synthase.